Here is a 268-residue protein sequence, read N- to C-terminus: Hydroxyacylglutathione hydrolase (268 aa).

Residues His56, His58, Asp60, His61, His113, Asp130, and His168 each coordinate Zn(2+).

This sequence belongs to the metallo-beta-lactamase superfamily. Glyoxalase II family. Monomer. Requires Zn(2+) as cofactor.

It catalyses the reaction an S-(2-hydroxyacyl)glutathione + H2O = a 2-hydroxy carboxylate + glutathione + H(+). It participates in secondary metabolite metabolism; methylglyoxal degradation; (R)-lactate from methylglyoxal: step 2/2. In terms of biological role, thiolesterase that catalyzes the hydrolysis of S-D-lactoyl-glutathione to form glutathione and D-lactic acid. The polypeptide is Hydroxyacylglutathione hydrolase (Hydrogenovibrio crunogenus (strain DSM 25203 / XCL-2) (Thiomicrospira crunogena)).